The following is a 535-amino-acid chain: Protein PyrBI (535 aa).

The interval 1–341 is aspartate carbamoyltransferase; that stretch reads MENKFMGRSL…MIAGKIGDDY (341 aa). A linker region spans residues 342-370; sequence KGPEPKSCERVEDEDYIVEVPINNSKESK. Residues 371-535 form an aspartate carbamoyltransferase regulatory region region; sequence VETFSEGVRP…FKEIWGEKKN (165 aa). 4 residues coordinate Zn(2+): Cys488, Cys493, Cys517, and Cys520.

It in the N-terminal section; belongs to the aspartate/ornithine carbamoyltransferase superfamily. ATCase family. This sequence in the C-terminal section; belongs to the PyrI family.

It catalyses the reaction carbamoyl phosphate + L-aspartate = N-carbamoyl-L-aspartate + phosphate + H(+). Its pathway is pyrimidine metabolism; UMP biosynthesis via de novo pathway; (S)-dihydroorotate from bicarbonate: step 2/3. The sequence is that of Protein PyrBI (pyrBI) from Treponema denticola (strain ATCC 35405 / DSM 14222 / CIP 103919 / JCM 8153 / KCTC 15104).